Consider the following 376-residue polypeptide: Dihydroorotate dehydrogenase (quinone) (376 aa).

FMN-binding positions include 78 to 82 and Thr-102; that span reads AGFDK. Position 82 (Lys-82) interacts with substrate. 127-131 lines the substrate pocket; it reads NRMGF. FMN-binding residues include Asn-157 and Asn-190. A substrate-binding site is contributed by Asn-190. The active-site Nucleophile is Ser-193. A substrate-binding site is contributed by Asn-195. Residues Lys-228 and Thr-256 each contribute to the FMN site. Position 257 to 258 (257 to 258) interacts with substrate; the sequence is NT. FMN-binding positions include Gly-286, Gly-315, and 336–337; that span reads YT.

Belongs to the dihydroorotate dehydrogenase family. Type 2 subfamily. In terms of assembly, monomer. It depends on FMN as a cofactor.

It localises to the cell membrane. The catalysed reaction is (S)-dihydroorotate + a quinone = orotate + a quinol. The protein operates within pyrimidine metabolism; UMP biosynthesis via de novo pathway; orotate from (S)-dihydroorotate (quinone route): step 1/1. Catalyzes the conversion of dihydroorotate to orotate with quinone as electron acceptor. This chain is Dihydroorotate dehydrogenase (quinone), found in Nostoc sp. (strain PCC 7120 / SAG 25.82 / UTEX 2576).